Consider the following 335-residue polypeptide: (+)-caryolan-1-ol synthase (335 aa).

Asp-83, Asp-87, Asn-220, Ser-224, and Glu-228 together coordinate Mg(2+). A DDXXD motif motif is present at residues 83–87 (DDEFD). An NSE/DTE motif motif is present at residues 220 to 228 (NDICSFEKE).

The protein belongs to the terpene synthase family. It depends on Mg(2+) as a cofactor. Mn(2+) is required as a cofactor.

The enzyme catalyses (2E,6E)-farnesyl diphosphate = (+)-(E)-beta-caryophyllene + diphosphate. It catalyses the reaction (+)-(E)-beta-caryophyllene + H2O = (+)-caryolan-1-ol. It functions in the pathway secondary metabolite biosynthesis; terpenoid biosynthesis. In terms of biological role, sesquiterpene cyclase that first catalyzes the cyclization of farnesyl diphosphate (FPP) to the bicyclic sesquiterpene (+)-beta-caryophyllene intermediate, and then its conversion to (+)-caryolan-1-ol via a second cyclization and the addition of a water molecule. The chain is (+)-caryolan-1-ol synthase (gcoA) from Streptomyces griseus subsp. griseus (strain JCM 4626 / CBS 651.72 / NBRC 13350 / KCC S-0626 / ISP 5235).